Here is a 263-residue protein sequence, read N- to C-terminus: Hemin import ATP-binding protein HmuV (263 aa).

Positions 2–242 (IEARDVSVDI…DLIEKVFDCR (241 aa)) constitute an ABC transporter domain. Position 34-41 (34-41 (GPNGSGKT)) interacts with ATP.

It belongs to the ABC transporter superfamily. Heme (hemin) importer (TC 3.A.1.14.5) family. The complex is composed of two ATP-binding proteins (HmuV), two transmembrane proteins (HmuU) and a solute-binding protein (HmuT).

It localises to the cell inner membrane. In terms of biological role, part of the ABC transporter complex HmuTUV involved in hemin import. Responsible for energy coupling to the transport system. The polypeptide is Hemin import ATP-binding protein HmuV (Mesorhizobium japonicum (strain LMG 29417 / CECT 9101 / MAFF 303099) (Mesorhizobium loti (strain MAFF 303099))).